A 193-amino-acid polypeptide reads, in one-letter code: Rho-related GTP-binding protein RhoA-B (193 aa).

GTP contacts are provided by residues 12-19, 30-37, 59-63, 117-120, and 160-162; these read GDGACGKT, FPEVYVPT, DTAGQ, NKKD, and SAK. Residue Tyr34 is glycosylated ((Microbial infection) O-linked (GlcNAc) tyrosine; by Yersinia Afp18). Cys190 carries the cysteine methyl ester modification. Cys190 carries S-geranylgeranyl cysteine lipidation. Positions 191-193 are cleaved as a propeptide — removed in mature form; sequence CLL.

This sequence belongs to the small GTPase superfamily. Rho family. In terms of processing, (Microbial infection) Glycosylated at Tyr-34 by Yersinia ruckeri toxin Afp18. Mono-O-GlcNAcylation by Afp18 inhibits RhoA activation by guanine nucleotide exchange factors and blocks RhoA signaling.

Its subcellular location is the cell membrane. Functionally, regulates a signal transduction pathway linking plasma membrane receptors to the assembly of focal adhesions and actin stress fibers. The protein is Rho-related GTP-binding protein RhoA-B of Danio rerio (Zebrafish).